Reading from the N-terminus, the 277-residue chain is Multiple sugar-binding transport system permease protein MsmG (277 aa).

The next 6 helical transmembrane spans lie at 13–33 (YVLLTVGGILILIPLMVTVFS), 74–94 (VITVLSVLVVMLFIPAAAYSI), 110–130 (LLILGIFVPFQVIMIPITVMM), 141–161 (LIILYLTYAIPQTLFLYVGYI), 198–218 (TTLIINALWFWNDFMLPLLIL), and 243–263 (GPSFASYIVGIITITIVYLIF). The 195-residue stretch at 69–263 (FWNSTVITVL…ITITIVYLIF (195 aa)) folds into the ABC transmembrane type-1 domain.

This sequence belongs to the binding-protein-dependent transport system permease family. MalFG subfamily.

It localises to the cell membrane. Its function is as follows. Involved in a binding protein-dependent transport system responsible for the uptake of melibiose, raffinose and isomaltotriose. This is Multiple sugar-binding transport system permease protein MsmG (msmG) from Streptococcus mutans serotype c (strain ATCC 700610 / UA159).